The sequence spans 368 residues: D-Ala-D/L-Ala epimerase (368 aa).

Substrate is bound by residues T135 and 160 to 162 (KVK). Mg(2+)-binding residues include D190, E216, and D241. Substrate-binding positions include K265 and 318–320 (DFD).

Belongs to the mandelate racemase/muconate lactonizing enzyme family. The cofactor is Mg(2+).

In terms of biological role, catalyzes the epimerization of D-Ala-D-Ala to D-Ala-L-Ala. Has broad substrate specificity and catalyzes the epimerization of a variety of dipeptides containing an N-terminal Ala followed by a hydrophobic or polar residue, such as Val, Ser and Met (in vitro). The sequence is that of D-Ala-D/L-Ala epimerase (tfdD) from Cytophaga hutchinsonii (strain ATCC 33406 / DSM 1761 / CIP 103989 / NBRC 15051 / NCIMB 9469 / D465).